The sequence spans 307 residues: Ribosomal RNA small subunit methyltransferase H (307 aa).

S-adenosyl-L-methionine is bound by residues 33–35, Asp51, Phe82, Asp96, and Gln103; that span reads GGY.

The protein belongs to the methyltransferase superfamily. RsmH family.

Its subcellular location is the cytoplasm. The enzyme catalyses cytidine(1402) in 16S rRNA + S-adenosyl-L-methionine = N(4)-methylcytidine(1402) in 16S rRNA + S-adenosyl-L-homocysteine + H(+). Its function is as follows. Specifically methylates the N4 position of cytidine in position 1402 (C1402) of 16S rRNA. This Rickettsia massiliae (strain Mtu5) protein is Ribosomal RNA small subunit methyltransferase H.